We begin with the raw amino-acid sequence, 246 residues long: Hydroxyacylglutathione hydrolase (246 aa).

Zn(2+)-binding residues include His-58, His-60, Asp-62, His-63, His-117, Asp-137, and His-175.

Belongs to the metallo-beta-lactamase superfamily. Glyoxalase II family. As to quaternary structure, monomer. Zn(2+) serves as cofactor.

It carries out the reaction an S-(2-hydroxyacyl)glutathione + H2O = a 2-hydroxy carboxylate + glutathione + H(+). It functions in the pathway secondary metabolite metabolism; methylglyoxal degradation; (R)-lactate from methylglyoxal: step 2/2. In terms of biological role, thiolesterase that catalyzes the hydrolysis of S-D-lactoyl-glutathione to form glutathione and D-lactic acid. This chain is Hydroxyacylglutathione hydrolase, found in Prochlorococcus marinus (strain MIT 9301).